Consider the following 1440-residue polypeptide: Genome polyprotein (1440 aa).

Positions glycine 32 to alanine 53 are cleaved as a propeptide — ER anchor for the capsid protein C, removed in mature form by serine protease NS3. The chain crosses the membrane as a helical span at residues glycine 36–leucine 56. At serine 57 to asparagine 180 the chain is on the extracellular side. The N-linked (GlcNAc...) asparagine; by host glycan is linked to asparagine 68. Residues tryptophan 181 to serine 201 form a helical membrane-spanning segment. Residues asparagine 202–arginine 207 are Cytoplasmic-facing. A helical transmembrane segment spans residues tryptophan 208–serine 222. Residues phenylalanine 223–leucine 674 lie on the Extracellular side of the membrane. 6 disulfide bridges follow: cysteine 225-cysteine 252, cysteine 282-cysteine 338, cysteine 282-cysteine 343, cysteine 296-cysteine 327, cysteine 314-cysteine 338, and cysteine 314-cysteine 343. A fusion peptide region spans residues aspartate 320–glycine 333. Asparagine 376 carries an N-linked (GlcNAc...) asparagine; by host glycan. 2 disulfide bridges follow: cysteine 412/cysteine 509 and cysteine 526/cysteine 557. The helical transmembrane segment at phenylalanine 675–valine 695 threads the bilayer. Topologically, residues asparagine 696 to serine 701 are cytoplasmic. The chain crosses the membrane as a helical span at residues isoleucine 702–alanine 722. Residues aspartate 723–aspartate 1147 are Extracellular-facing. 6 disulfides stabilise this stretch: cysteine 726–cysteine 737, cysteine 777–cysteine 865, cysteine 901–cysteine 945, cysteine 1002–cysteine 1051, cysteine 1013–cysteine 1034, and cysteine 1035–cysteine 1038. Residues asparagine 852 and asparagine 929 are each glycosylated (N-linked (GlcNAc...) asparagine; by host). The chain crosses the membrane as a helical span at residues valine 1148–methionine 1168. Residues leucine 1169–asparagine 1178 lie on the Cytoplasmic side of the membrane. Residues valine 1179–valine 1199 traverse the membrane as a helical segment. A topological domain (lumenal) is located at residue histidine 1200. A helical transmembrane segment spans residues glycine 1201–threonine 1221. Residues serine 1222 to arginine 1237 are Cytoplasmic-facing. The chain crosses the membrane as a helical span at residues alanine 1238 to glutamine 1258. At glutamate 1259–glycine 1269 the chain is on the lumenal side. Residues alanine 1270 to alanine 1290 form a helical membrane-spanning segment. At glycine 1291–glycine 1302 the chain is on the cytoplasmic side. Residues tryptophan 1303 to alanine 1323 traverse the membrane as a helical segment. At glutamate 1324–aspartate 1326 the chain is on the lumenal side. Residues isoleucine 1327–serine 1347 form a helical membrane-spanning segment. Residues glycine 1348–serine 1404 lie on the Cytoplasmic side of the membrane. Residues leucine 1355 to valine 1394 form an interacts with and activates NS3 protease region. Residues cysteine 1405 to leucine 1425 constitute an intramembrane region (helical). Over threonine 1426 to proline 1440 the chain is Cytoplasmic.

As to quaternary structure, homodimer. Interacts (via N-terminus) with host EXOC1 (via C-terminus); this interaction results in EXOC1 degradation through the proteasome degradation pathway. In terms of assembly, forms heterodimers with envelope protein E in the endoplasmic reticulum and Golgi. Homodimer; in the endoplasmic reticulum and Golgi. Interacts with protein prM. Interacts with non-structural protein 1. As to quaternary structure, homodimer; Homohexamer when secreted. Interacts with envelope protein E. NS1 interacts with NS4B. Interacts with host complement protein CFH; this interaction leads to the degradation of C3. In terms of assembly, interacts (via N-terminus) with serine protease NS3. Forms a heterodimer with serine protease NS3. May form homooligomers. As to quaternary structure, forms a heterodimer with NS2B. Interacts with non-structural protein 2A (via N-terminus). Interacts with NS4B. Interacts with unphosphorylated RNA-directed RNA polymerase NS5; this interaction stimulates RNA-directed RNA polymerase NS5 guanylyltransferase activity. It depends on Mn(2+) as a cofactor. The cofactor is Mg(2+). Post-translationally, specific enzymatic cleavages in vivo yield mature proteins. Cleavages in the lumen of endoplasmic reticulum are performed by host signal peptidase, whereas cleavages in the cytoplasmic side are performed by serine protease NS3. Signal cleavage at the 2K-4B site requires a prior NS3 protease-mediated cleavage at the 4A-2K site. In terms of processing, cleaved in post-Golgi vesicles by a host furin, releasing the mature small envelope protein M, and peptide pr. This cleavage is incomplete as up to 30% of viral particles still carry uncleaved prM. N-glycosylated. Post-translationally, N-glycosylated. The excreted form is glycosylated and this is required for efficient secretion of the protein from infected cells. In terms of processing, RNA-directed RNA polymerase NS5: Phosphorylated on serines residues. This phosphorylation may trigger NS5 nuclear localization.

Its subcellular location is the virion. The protein localises to the host nucleus. The protein resides in the host cytoplasm. It localises to the host perinuclear region. It is found in the secreted. Its subcellular location is the virion membrane. The protein localises to the host endoplasmic reticulum membrane. It carries out the reaction Selective hydrolysis of -Xaa-Xaa-|-Yaa- bonds in which each of the Xaa can be either Arg or Lys and Yaa can be either Ser or Ala.. The catalysed reaction is a ribonucleoside 5'-triphosphate + H2O = a ribonucleoside 5'-diphosphate + phosphate + H(+). The enzyme catalyses ATP + H2O = ADP + phosphate + H(+). Functionally, plays a role in virus budding by binding to the cell membrane and gathering the viral RNA into a nucleocapsid that forms the core of a mature virus particle. During virus entry, may induce genome penetration into the host cytoplasm after hemifusion induced by the surface proteins. Can migrate to the cell nucleus where it modulates host functions. Overcomes the anti-viral effects of host EXOC1 by sequestering and degrading the latter through the proteasome degradation pathway. Its function is as follows. Inhibits RNA silencing by interfering with host Dicer. In terms of biological role, prevents premature fusion activity of envelope proteins in trans-Golgi by binding to envelope protein E at pH 6.0. After virion release in extracellular space, gets dissociated from E dimers. Acts as a chaperone for envelope protein E during intracellular virion assembly by masking and inactivating envelope protein E fusion peptide. prM is the only viral peptide matured by host furin in the trans-Golgi network probably to avoid catastrophic activation of the viral fusion activity in acidic Golgi compartment prior to virion release. prM-E cleavage is inefficient, and many virions are only partially matured. These uncleaved prM would play a role in immune evasion. Functionally, may play a role in virus budding. Exerts cytotoxic effects by activating a mitochondrial apoptotic pathway through M ectodomain. May display a viroporin activity. Its function is as follows. Binds to host cell surface receptor and mediates fusion between viral and cellular membranes. Envelope protein is synthesized in the endoplasmic reticulum in the form of heterodimer with protein prM. They play a role in virion budding in the ER, and the newly formed immature particle is covered with 60 spikes composed of heterodimer between precursor prM and envelope protein E. The virion is transported to the Golgi apparatus where the low pH causes dissociation of PrM-E heterodimers and formation of E homodimers. prM-E cleavage is inefficient, and many virions are only partially matured. These uncleaved prM would play a role in immune evasion. In terms of biological role, involved in immune evasion, pathogenesis and viral replication. Once cleaved off the polyprotein, is targeted to three destinations: the viral replication cycle, the plasma membrane and the extracellular compartment. Essential for viral replication. Required for formation of the replication complex and recruitment of other non-structural proteins to the ER-derived membrane structures. Excreted as a hexameric lipoparticle that plays a role against host immune response. Antagonizing the complement function. Binds to the host macrophages and dendritic cells. Inhibits signal transduction originating from Toll-like receptor 3 (TLR3). Component of the viral RNA replication complex that functions in virion assembly and antagonizes the host alpha/beta interferon antiviral response. Functionally, required cofactor for the serine protease function of NS3. May have membrane-destabilizing activity and form viroporins. Its function is as follows. Displays three enzymatic activities: serine protease, NTPase and RNA helicase. NS3 serine protease, in association with NS2B, performs its autocleavage and cleaves the polyprotein at dibasic sites in the cytoplasm: C-prM, NS2A-NS2B, NS2B-NS3, NS3-NS4A, NS4A-2K and NS4B-NS5. NS3 RNA helicase binds RNA and unwinds dsRNA in the 3' to 5' direction. In terms of biological role, non-structural protein 4A: Regulates the ATPase activity of the NS3 helicase activity. NS4A allows NS3 helicase to conserve energy during unwinding. Peptide 2k: Functions as a signal peptide for NS4B and is required for the interferon antagonism activity of the latter. Functionally, non-structural protein 4B: Induces the formation of ER-derived membrane vesicles where the viral replication takes place. Inhibits interferon (IFN)-induced host STAT1 phosphorylation and nuclear translocation, thereby preventing the establishment of cellular antiviral state by blocking the IFN-alpha/beta pathway. Inhibits STAT2 translocation in the nucleus after IFN-alpha treatment. Its function is as follows. RNA-directed RNA polymerase NS5: Replicates the viral (+) and (-) RNA genome. Performs the capping of genomes in the cytoplasm. NS5 methylates viral RNA cap at guanine N-7 and ribose 2'-O positions. Besides its role in RNA genome replication, also prevents the establishment of cellular antiviral state by blocking the interferon-alpha/beta (IFN-alpha/beta) signaling pathway. Inhibits host TYK2 and STAT2 phosphorylation, thereby preventing activation of JAK-STAT signaling pathway. The polypeptide is Genome polyprotein (Japanese encephalitis virus (strain Nakayama) (JEV)).